A 469-amino-acid polypeptide reads, in one-letter code: MNPNQKIITIGSVSLTIATVCFLMQTAILVTTVTLHFKQYECDSPASNQVMPCEPIIIERNITEIVYLNNTTIEKEICPKVVEYRNWSKPQCQITGFAPFSKDNSIRLSAGGDIWVTREPYVSCDHGKCYQFALGQGTTLDNKHSNDTIHDRIPHRTLLMNELGVPFHLGTRQVCIAWSSSSCHDGKAWLHVCITGDDKNATASFIYDGRLVDSIGSWSQNILRTQESECVCINGTCTVVMTDGSASGRADTRILFIEEGKIVHISPLSGSAQHVEECSCYPRYPGVRCICRDNWKGSNRPVVDINMEDYSIDSSYVCSGLVGDTPRNDDRSSNSNCRNPNNERGNQGVKGWAFDNGDDVWMGRTISKDLRSGYETFKVIGGWSTPNSKSQINRQVIVDSDNRSGYSGIFSVEGKSCINRCFYVELIRGRKQEARVWWTSNSIVVFCGTSGTYGTGSWPDGANINFMPI.

The Intravirion segment spans residues 1-6 (MNPNQK). The helical transmembrane segment at 7–29 (IITIGSVSLTIATVCFLMQTAIL) threads the bilayer. Residues 11-33 (GSVSLTIATVCFLMQTAILVTTV) form an involved in apical transport and lipid raft association region. At 30 to 469 (VTTVTLHFKQ…DGANINFMPI (440 aa)) the chain is on the virion surface side. The interval 36–90 (HFKQYECDSPASNQVMPCEPIIIERNITEIVYLNNTTIEKEICPKVVEYRNWSKP) is hypervariable stalk region. N-linked (GlcNAc...) asparagine; by host glycans are attached at residues Asn-61, Asn-69, Asn-70, and Asn-86. Residues 91 to 469 (QCQITGFAPF…DGANINFMPI (379 aa)) are head of neuraminidase. 8 disulfide bridges follow: Cys-92-Cys-417, Cys-124-Cys-129, Cys-183-Cys-230, Cys-232-Cys-237, Cys-278-Cys-291, Cys-280-Cys-289, Cys-318-Cys-337, and Cys-421-Cys-447. Arg-118 provides a ligand contact to substrate. The N-linked (GlcNAc...) asparagine; by host glycan is linked to Asn-146. The Proton donor/acceptor role is filled by Asp-151. Residue Arg-152 participates in substrate binding. N-linked (GlcNAc...) asparagine; by host glycosylation is found at Asn-200 and Asn-234. Substrate is bound at residue 276–277 (EE). Arg-292 serves as a coordination point for substrate. Residues Asp-293, Gly-297, and Asp-324 each coordinate Ca(2+). The tract at residues 324 to 350 (DTPRNDDRSSNSNCRNPNNERGNQGVK) is disordered. Positions 333-342 (SNSNCRNPNN) are enriched in low complexity. Arg-371 is a binding site for substrate. N-linked (GlcNAc...) asparagine; by host glycosylation is present at Asn-402. The active-site Nucleophile is the Tyr-406.

Belongs to the glycosyl hydrolase 34 family. Homotetramer. The cofactor is Ca(2+). N-glycosylated.

It is found in the virion membrane. It localises to the host apical cell membrane. It catalyses the reaction Hydrolysis of alpha-(2-&gt;3)-, alpha-(2-&gt;6)-, alpha-(2-&gt;8)- glycosidic linkages of terminal sialic acid residues in oligosaccharides, glycoproteins, glycolipids, colominic acid and synthetic substrates.. Its activity is regulated as follows. Inhibited by the neuraminidase inhibitors zanamivir (Relenza) and oseltamivir (Tamiflu). These drugs interfere with the release of progeny virus from infected cells and are effective against all influenza strains. Resistance to neuraminidase inhibitors is quite rare. Its function is as follows. Catalyzes the removal of terminal sialic acid residues from viral and cellular glycoconjugates. Cleaves off the terminal sialic acids on the glycosylated HA during virus budding to facilitate virus release. Additionally helps virus spread through the circulation by further removing sialic acids from the cell surface. These cleavages prevent self-aggregation and ensure the efficient spread of the progeny virus from cell to cell. Otherwise, infection would be limited to one round of replication. Described as a receptor-destroying enzyme because it cleaves a terminal sialic acid from the cellular receptors. May facilitate viral invasion of the upper airways by cleaving the sialic acid moieties on the mucin of the airway epithelial cells. Likely to plays a role in the budding process through its association with lipid rafts during intracellular transport. May additionally display a raft-association independent effect on budding. Plays a role in the determination of host range restriction on replication and virulence. Sialidase activity in late endosome/lysosome traffic seems to enhance virus replication. In Influenza A virus (strain A/Northern Territory/60/1968 H3N2) (Influenza A virus (strain NT60)), this protein is Neuraminidase.